The chain runs to 376 residues: Alcohol dehydrogenase 1 (376 aa).

The residue at position 2 (S2) is an N-acetylserine. Zn(2+) contacts are provided by C47, H68, C98, C101, C104, C112, and C176. NAD(+)-binding positions include 201–206, D225, and K230; that span reads GLGGVG. An N6-succinyllysine modification is found at K235. NAD(+) is bound at residue 294-296; sequence VGV. The residue at position 341 (K341) is an N6-succinyllysine. Residue R371 coordinates NAD(+).

The protein belongs to the zinc-containing alcohol dehydrogenase family. Class-I subfamily. Dimer of identical or non-identical chains of three types (A, B, C), which are coded by 3 separate genes at different loci. Zn(2+) serves as cofactor.

It localises to the cytoplasm. It carries out the reaction a primary alcohol + NAD(+) = an aldehyde + NADH + H(+). It catalyses the reaction a secondary alcohol + NAD(+) = a ketone + NADH + H(+). The sequence is that of Alcohol dehydrogenase 1 (Adh1) from Rattus norvegicus (Rat).